We begin with the raw amino-acid sequence, 423 residues long: Gamma-glutamyl phosphate reductase (423 aa).

Belongs to the gamma-glutamyl phosphate reductase family.

The protein localises to the cytoplasm. The enzyme catalyses L-glutamate 5-semialdehyde + phosphate + NADP(+) = L-glutamyl 5-phosphate + NADPH + H(+). The protein operates within amino-acid biosynthesis; L-proline biosynthesis; L-glutamate 5-semialdehyde from L-glutamate: step 2/2. In terms of biological role, catalyzes the NADPH-dependent reduction of L-glutamate 5-phosphate into L-glutamate 5-semialdehyde and phosphate. The product spontaneously undergoes cyclization to form 1-pyrroline-5-carboxylate. The protein is Gamma-glutamyl phosphate reductase of Desulfovibrio desulfuricans (strain ATCC 27774 / DSM 6949 / MB).